Consider the following 218-residue polypeptide: Glutathione S-transferase PM239X14 (218 aa).

Positions 2 to 85 (VTVKLYGMAY…YLVAKYGKGS (84 aa)) constitute a GST N-terminal domain. Glutathione contacts are provided by residues 12-13 (ST), 41-42 (HK), 55-56 (VI), and 69-70 (ES). One can recognise a GST C-terminal domain in the interval 93 to 218 (DPKAYGLFEQ…LLRNSSKEFM (126 aa)).

It belongs to the GST superfamily. Phi family. In terms of tissue distribution, expressed in vegetative rosettes.

It is found in the cytoplasm. The protein resides in the cytosol. It carries out the reaction RX + glutathione = an S-substituted glutathione + a halide anion + H(+). Functionally, specifically catalyzes the conjugation of synthetic 1-chloro-2,4-ditrobenzene to GSH. Also functions as a glutathione peroxidase, converting linoleate oxidation products into their corresponding hydroxyacids. This enzyme may thus serve to protect the cell from oxygen toxicity as well as from exogenous toxins such as herbicides. The sequence is that of Glutathione S-transferase PM239X14 from Arabidopsis thaliana (Mouse-ear cress).